We begin with the raw amino-acid sequence, 331 residues long: DNA-directed RNA polymerase subunit alpha (331 aa).

Residues 1–230 are alpha N-terminal domain (alpha-NTD); that stretch reads MKNIKTSPYI…KQMSVFNSEW (230 aa). The alpha C-terminal domain (alpha-CTD) stretch occupies residues 247–331; that stretch reads LKPLLQKIEA…ALQKRLNKLK (85 aa).

Belongs to the RNA polymerase alpha chain family. Homodimer. The RNAP catalytic core consists of 2 alpha, 1 beta/beta' and 1 omega subunit. When a sigma factor is associated with the core the holoenzyme is formed, which can initiate transcription.

The catalysed reaction is RNA(n) + a ribonucleoside 5'-triphosphate = RNA(n+1) + diphosphate. DNA-dependent RNA polymerase catalyzes the transcription of DNA into RNA using the four ribonucleoside triphosphates as substrates. The chain is DNA-directed RNA polymerase subunit alpha from Wolinella succinogenes (strain ATCC 29543 / DSM 1740 / CCUG 13145 / JCM 31913 / LMG 7466 / NCTC 11488 / FDC 602W) (Vibrio succinogenes).